The chain runs to 171 residues: Putative auxin-responsive protein IAA29 (171 aa).

A PB1 domain is found at 19 to 114 (SRFVKVFMHG…TVKKIYIVPA (96 aa)). The interval 117-171 (QNENDYQEEEEDNAAAAATADEDGDGAAADDGVAAAADDVDDVAGYTSNDDPSFD) is disordered. Over residues 142-153 (GAAADDGVAAAA) the composition is skewed to low complexity. A compositionally biased stretch (polar residues) spans 162–171 (YTSNDDPSFD).

It belongs to the Aux/IAA family. Homodimers and heterodimers.

It is found in the nucleus. Its function is as follows. Aux/IAA proteins are short-lived transcriptional factors that function as repressors of early auxin response genes at low auxin concentrations. The protein is Putative auxin-responsive protein IAA29 (IAA29) of Oryza sativa subsp. japonica (Rice).